A 389-amino-acid polypeptide reads, in one-letter code: MKFMKYAVFFYTSVGIEPYTIDSRSKKASLWSHLLFWANVINLSVIVFGEILYLGVAYSDGKFIDAVTVLSYIGFVIVGMSKMFFIWWKKTDLSDLVKELEHIYPNGKAEEEMYRLDRYLRSCSRISITYALLYSVLIWTFNLFSIMQFLVYEKLLKIRVVGQTLPYLMYFPWNWHENWTYYVLLFCQNFAGHTSASGQISTDLLLCAVATQVVMHFDYLARVVEKQVLDRDWSENSRFLAKTVQYHQRILRLMDVLNDIFGIPLLLNFMVSTFVICFVGFQMTVGVPPDIMIKLFLFLFSSLSQVYLICHYGQLIADASSSLSISAYKQNWQNADIRYRRALVFFIARPQRTTYLKATIFMNITRATMTDLLQVSYKFFALLRTMYIK.

Over 1-33 the chain is Cytoplasmic; sequence MKFMKYAVFFYTSVGIEPYTIDSRSKKASLWSH. A helical membrane pass occupies residues 34 to 54; that stretch reads LLFWANVINLSVIVFGEILYL. Topologically, residues 55–66 are extracellular; the sequence is GVAYSDGKFIDA. A helical transmembrane segment spans residues 67-87; the sequence is VTVLSYIGFVIVGMSKMFFIW. The Cytoplasmic portion of the chain corresponds to 88–130; it reads WKKTDLSDLVKELEHIYPNGKAEEEMYRLDRYLRSCSRISITY. Residues 131–151 form a helical membrane-spanning segment; the sequence is ALLYSVLIWTFNLFSIMQFLV. At 152–199 the chain is on the extracellular side; sequence YEKLLKIRVVGQTLPYLMYFPWNWHENWTYYVLLFCQNFAGHTSASGQ. Asn178 carries an N-linked (GlcNAc...) asparagine glycan. The helical transmembrane segment at 200–220 threads the bilayer; the sequence is ISTDLLLCAVATQVVMHFDYL. The Cytoplasmic portion of the chain corresponds to 221-259; the sequence is ARVVEKQVLDRDWSENSRFLAKTVQYHQRILRLMDVLND. The helical transmembrane segment at 260–280 threads the bilayer; sequence IFGIPLLLNFMVSTFVICFVG. Residues 281–290 are Extracellular-facing; that stretch reads FQMTVGVPPD. The chain crosses the membrane as a helical span at residues 291-311; the sequence is IMIKLFLFLFSSLSQVYLICH. At 312–359 the chain is on the cytoplasmic side; it reads YGQLIADASSSLSISAYKQNWQNADIRYRRALVFFIARPQRTTYLKAT. A helical membrane pass occupies residues 360-380; it reads IFMNITRATMTDLLQVSYKFF. Residues 381-389 are Extracellular-facing; it reads ALLRTMYIK.

The protein belongs to the insect chemoreceptor superfamily. Heteromeric odorant receptor channel (TC 1.A.69) family. Or49a subfamily. As to quaternary structure, interacts with Orco. Complexes exist early in the endomembrane system in olfactory sensory neurons (OSNs), coupling these complexes to the conserved ciliary trafficking pathway.

It is found in the cell membrane. In terms of biological role, odorant receptor which mediates acceptance or avoidance behavior, depending on its substrates. The odorant receptor repertoire encodes a large collection of odor stimuli that vary widely in identity, intensity, and duration. May form a complex with Orco to form odorant-sensing units, providing sensitive and prolonged odorant signaling and calcium permeability. In Drosophila melanogaster (Fruit fly), this protein is Odorant receptor 85c (Or85c).